A 168-amino-acid polypeptide reads, in one-letter code: Ribosome maturation factor RimM (168 aa).

Residues 96–168 form the PRC barrel domain; sequence EGDYYWTDLI…IIVVEWDADF (73 aa).

Belongs to the RimM family. As to quaternary structure, binds ribosomal protein uS19.

Its subcellular location is the cytoplasm. In terms of biological role, an accessory protein needed during the final step in the assembly of 30S ribosomal subunit, possibly for assembly of the head region. Essential for efficient processing of 16S rRNA. May be needed both before and after RbfA during the maturation of 16S rRNA. It has affinity for free ribosomal 30S subunits but not for 70S ribosomes. The protein is Ribosome maturation factor RimM of Coxiella burnetii (strain RSA 331 / Henzerling II).